A 207-amino-acid chain; its full sequence is dTTP/UTP pyrophosphatase (207 aa).

Residue Asp87 is the Proton acceptor of the active site.

This sequence belongs to the Maf family. YhdE subfamily. The cofactor is a divalent metal cation.

Its subcellular location is the cytoplasm. It carries out the reaction dTTP + H2O = dTMP + diphosphate + H(+). It catalyses the reaction UTP + H2O = UMP + diphosphate + H(+). Nucleoside triphosphate pyrophosphatase that hydrolyzes dTTP and UTP. May have a dual role in cell division arrest and in preventing the incorporation of modified nucleotides into cellular nucleic acids. This is dTTP/UTP pyrophosphatase from Bordetella pertussis (strain Tohama I / ATCC BAA-589 / NCTC 13251).